We begin with the raw amino-acid sequence, 243 residues long: Tryptophan synthase alpha chain (243 aa).

Active-site proton acceptor residues include E31 and D42.

It belongs to the TrpA family. Tetramer of two alpha and two beta chains.

The enzyme catalyses (1S,2R)-1-C-(indol-3-yl)glycerol 3-phosphate + L-serine = D-glyceraldehyde 3-phosphate + L-tryptophan + H2O. Its pathway is amino-acid biosynthesis; L-tryptophan biosynthesis; L-tryptophan from chorismate: step 5/5. Its function is as follows. The alpha subunit is responsible for the aldol cleavage of indoleglycerol phosphate to indole and glyceraldehyde 3-phosphate. This chain is Tryptophan synthase alpha chain, found in Staphylococcus haemolyticus (strain JCSC1435).